Reading from the N-terminus, the 582-residue chain is Poly(A) RNA polymerase, mitochondrial (582 aa).

A mitochondrion-targeting transit peptide spans 1–37 (MAVPGVGLLTRLNLCARRRTRVQRPIVRLLSCPGTVA). N6-acetyllysine is present on K90. ATP contacts are provided by residues 107–109 (YES) and 241–242 (GC). Residues D243 and D245 each contribute to the Mg(2+) site. Residues 437–483 (LELLLKEFFEYFGNFAFDKNSINIRQGREQNKPDSSPLYIQNPFETS) enclose the PAP-associated domain.

The protein belongs to the DNA polymerase type-B-like family. As to quaternary structure, homodimer. The cofactor is Mg(2+). Requires Mn(2+) as cofactor. As to expression, ubiquitous, with stronger expression in tissues with high energy requirements: heart, brain, and skeletal muscle.

The protein resides in the cytoplasm. It localises to the mitochondrion. It carries out the reaction RNA(n) + ATP = RNA(n)-3'-adenine ribonucleotide + diphosphate. In terms of biological role, polymerase that creates the 3' poly(A) tail of mitochondrial transcripts. Can use all four nucleotides, but has higher activity with ATP and UTP (in vitro). Plays a role in replication-dependent histone mRNA degradation. May be involved in the terminal uridylation of mature histone mRNAs before their degradation is initiated. Might be responsible for the creation of some UAA stop codons which are not encoded in mtDNA. The chain is Poly(A) RNA polymerase, mitochondrial (MTPAP) from Homo sapiens (Human).